The primary structure comprises 395 residues: Sensor protein DltS (395 aa).

A run of 2 helical transmembrane segments spans residues 9-29 (FVFL…AVSN) and 136-156 (FLIL…SLYL). The Histidine kinase domain maps to 177 to 387 (DASHELKTPI…RLEVQLPIDG (211 aa)). Residue His-180 is modified to Phosphohistidine; by autocatalysis.

The protein resides in the cell membrane. The catalysed reaction is ATP + protein L-histidine = ADP + protein N-phospho-L-histidine.. Functionally, member of the two-component regulatory system DltS/DltR. Regulates the expression of the dlt operon. Probably phosphorylates DltR. This is Sensor protein DltS (dltS) from Streptococcus agalactiae serotype III (strain NEM316).